A 211-amino-acid chain; its full sequence is Large ribosomal subunit protein uL4 (211 aa).

The segment at E44–F90 is disordered. The span at G60 to K72 shows a compositional bias: basic residues.

It belongs to the universal ribosomal protein uL4 family. Part of the 50S ribosomal subunit.

One of the primary rRNA binding proteins, this protein initially binds near the 5'-end of the 23S rRNA. It is important during the early stages of 50S assembly. It makes multiple contacts with different domains of the 23S rRNA in the assembled 50S subunit and ribosome. Its function is as follows. Forms part of the polypeptide exit tunnel. In Ureaplasma parvum serovar 3 (strain ATCC 27815 / 27 / NCTC 11736), this protein is Large ribosomal subunit protein uL4.